Consider the following 290-residue polypeptide: Nucleoid occlusion protein (290 aa).

Residues 153 to 172 (EALAQRLGKGQSTIANKLRL) constitute a DNA-binding region (H-T-H motif).

This sequence belongs to the ParB family.

It is found in the cytoplasm. It localises to the nucleoid. Functionally, effects nucleoid occlusion by binding relatively nonspecifically to DNA and preventing the assembly of the division machinery in the vicinity of the nucleoid, especially under conditions that disturb the cell cycle. It helps to coordinate cell division and chromosome segregation by preventing the formation of the Z ring through the nucleoid, which would cause chromosome breakage. The chain is Nucleoid occlusion protein from Bacillus cereus (strain AH187).